The primary structure comprises 151 residues: Deoxyuridine 5'-triphosphate nucleotidohydrolase (151 aa).

Substrate is bound by residues 70–72, Asn83, 87–89, and Met97; these read RSG and LID.

Belongs to the dUTPase family. Mg(2+) is required as a cofactor.

It carries out the reaction dUTP + H2O = dUMP + diphosphate + H(+). The protein operates within pyrimidine metabolism; dUMP biosynthesis; dUMP from dCTP (dUTP route): step 2/2. In terms of biological role, this enzyme is involved in nucleotide metabolism: it produces dUMP, the immediate precursor of thymidine nucleotides and it decreases the intracellular concentration of dUTP so that uracil cannot be incorporated into DNA. In Stutzerimonas stutzeri (strain A1501) (Pseudomonas stutzeri), this protein is Deoxyuridine 5'-triphosphate nucleotidohydrolase.